Reading from the N-terminus, the 166-residue chain is 2-C-methyl-D-erythritol 2,4-cyclodiphosphate synthase (166 aa).

2 residues coordinate a divalent metal cation: D12 and H14. Residues 12 to 14 (DVH) and 38 to 39 (HS) contribute to the 4-CDP-2-C-methyl-D-erythritol 2-phosphate site. H46 contacts a divalent metal cation. Residues 60 to 62 (DIG), 136 to 139 (TTSE), F143, and R146 contribute to the 4-CDP-2-C-methyl-D-erythritol 2-phosphate site.

This sequence belongs to the IspF family. Homotrimer. Requires a divalent metal cation as cofactor.

The catalysed reaction is 4-CDP-2-C-methyl-D-erythritol 2-phosphate = 2-C-methyl-D-erythritol 2,4-cyclic diphosphate + CMP. Its pathway is isoprenoid biosynthesis; isopentenyl diphosphate biosynthesis via DXP pathway; isopentenyl diphosphate from 1-deoxy-D-xylulose 5-phosphate: step 4/6. Involved in the biosynthesis of isopentenyl diphosphate (IPP) and dimethylallyl diphosphate (DMAPP), two major building blocks of isoprenoid compounds. Catalyzes the conversion of 4-diphosphocytidyl-2-C-methyl-D-erythritol 2-phosphate (CDP-ME2P) to 2-C-methyl-D-erythritol 2,4-cyclodiphosphate (ME-CPP) with a corresponding release of cytidine 5-monophosphate (CMP). In Xanthomonas axonopodis pv. citri (strain 306), this protein is 2-C-methyl-D-erythritol 2,4-cyclodiphosphate synthase.